The sequence spans 21 residues: Hydroxypicolinic acid-activating enzyme (21 aa).

In terms of biological role, involved in etamycin biosynthesis. This is Hydroxypicolinic acid-activating enzyme from Streptomyces griseoviridis.